Here is a 179-residue protein sequence, read N- to C-terminus: Large ribosomal subunit protein uL5 (179 aa).

The protein belongs to the universal ribosomal protein uL5 family. Part of the 50S ribosomal subunit; part of the 5S rRNA/L5/L18/L25 subcomplex. Contacts the 5S rRNA and the P site tRNA. Forms a bridge to the 30S subunit in the 70S ribosome.

This is one of the proteins that bind and probably mediate the attachment of the 5S RNA into the large ribosomal subunit, where it forms part of the central protuberance. In the 70S ribosome it contacts protein S13 of the 30S subunit (bridge B1b), connecting the 2 subunits; this bridge is implicated in subunit movement. Contacts the P site tRNA; the 5S rRNA and some of its associated proteins might help stabilize positioning of ribosome-bound tRNAs. This is Large ribosomal subunit protein uL5 from Prochlorococcus marinus (strain NATL2A).